We begin with the raw amino-acid sequence, 488 residues long: Glutamyl-tRNA(Gln) amidotransferase subunit A, mitochondrial (488 aa).

Residues Lys-62 and Ser-140 each act as charge relay system in the active site. Ser-164 serves as the catalytic Acyl-ester intermediate. A disordered region spans residues 205 to 228; that stretch reads GHDDNDPTSITPQTRERIQDRLSR. Residues 218–227 are compositionally biased toward basic and acidic residues; that stretch reads TRERIQDRLS.

It belongs to the amidase family. GatA subfamily. In terms of assembly, subunit of the heterotrimeric GatCAB amidotransferase (AdT) complex, composed of A, B and C subunits.

The protein resides in the mitochondrion. It carries out the reaction L-glutamyl-tRNA(Gln) + L-glutamine + ATP + H2O = L-glutaminyl-tRNA(Gln) + L-glutamate + ADP + phosphate + H(+). Functionally, allows the formation of correctly charged Gln-tRNA(Gln) through the transamidation of misacylated Glu-tRNA(Gln) in the mitochondria. The reaction takes place in the presence of glutamine and ATP through an activated gamma-phospho-Glu-tRNA(Gln). The polypeptide is Glutamyl-tRNA(Gln) amidotransferase subunit A, mitochondrial (Tuber melanosporum (strain Mel28) (Perigord black truffle)).